Here is a 614-residue protein sequence, read N- to C-terminus: ATP-dependent zinc metalloprotease FtsH (614 aa).

The Stromal segment spans residues 1–7; the sequence is MKKQWKK. A helical transmembrane segment spans residues 8 to 28; sequence IVLFVLPVIITLITLSSFLFY. At 29–116 the chain is on the lumenal side; the sequence is NQDVVHNWSS…AHPSSSNVNL (88 aa). The chain crosses the membrane as a helical span at residues 117–137; that stretch reads VSWLSNLLLPLILIITLFFFF. Over 138–614 the chain is Stromal; the sequence is RRGNKSSSGP…EFMRIVEERV (477 aa). 211–218 is an ATP binding site; sequence GPPGTGKT. His-432 is a Zn(2+) binding site. Glu-433 is a catalytic residue. Residues His-436 and Asp-510 each contribute to the Zn(2+) site.

This sequence in the central section; belongs to the AAA ATPase family. It in the C-terminal section; belongs to the peptidase M41 family. As to quaternary structure, homohexamer. The cofactor is Zn(2+).

The protein resides in the plastid. It is found in the chloroplast thylakoid membrane. In terms of biological role, acts as a processive, ATP-dependent zinc metallopeptidase. This Cyanidium caldarium (Red alga) protein is ATP-dependent zinc metalloprotease FtsH.